The following is a 556-amino-acid chain: Urocanate hydratase (556 aa).

NAD(+) is bound by residues 52 to 53 (GG), glutamine 130, 176 to 178 (GMG), glutamate 196, arginine 201, 243 to 244 (NA), 264 to 268 (QTSAH), 274 to 275 (YL), and tyrosine 323. Cysteine 411 is an active-site residue. NAD(+) is bound at residue glycine 493.

Belongs to the urocanase family. NAD(+) is required as a cofactor.

Its subcellular location is the cytoplasm. The enzyme catalyses 4-imidazolone-5-propanoate = trans-urocanate + H2O. The protein operates within amino-acid degradation; L-histidine degradation into L-glutamate; N-formimidoyl-L-glutamate from L-histidine: step 2/3. Functionally, catalyzes the conversion of urocanate to 4-imidazolone-5-propionate. The chain is Urocanate hydratase from Rhodospirillum rubrum (strain ATCC 11170 / ATH 1.1.1 / DSM 467 / LMG 4362 / NCIMB 8255 / S1).